Reading from the N-terminus, the 164-residue chain is UPF0114 protein Sbal223_3668 (164 aa).

The next 4 membrane-spanning stretches (helical) occupy residues 15–35, 53–73, 108–128, and 136–156; these read IMAP…IKFF, LVLV…IVMV, KVAA…FMDV, and IMWY…MGYL.

This sequence belongs to the UPF0114 family.

Its subcellular location is the cell membrane. The sequence is that of UPF0114 protein Sbal223_3668 from Shewanella baltica (strain OS223).